A 67-amino-acid polypeptide reads, in one-letter code: Large ribosomal subunit protein bL35 (67 aa).

Positions 1–16 are enriched in basic residues; it reads MPKMKTKSGAKKRFRV. Positions 1–24 are disordered; it reads MPKMKTKSGAKKRFRVRPGGTVKR.

It belongs to the bacterial ribosomal protein bL35 family.

The chain is Large ribosomal subunit protein bL35 from Polaromonas naphthalenivorans (strain CJ2).